A 332-amino-acid polypeptide reads, in one-letter code: Glyceraldehyde-3-phosphate dehydrogenase 2 (332 aa).

NAD(+) is bound by residues 11 to 12 (RI), D32, and R77. D-glyceraldehyde 3-phosphate is bound by residues 148 to 150 (SCT), T179, 208 to 209 (TG), and R231. The active-site Nucleophile is the C149. N313 serves as a coordination point for NAD(+).

This sequence belongs to the glyceraldehyde-3-phosphate dehydrogenase family. Homotetramer.

It localises to the cytoplasm. It catalyses the reaction D-glyceraldehyde 3-phosphate + phosphate + NAD(+) = (2R)-3-phospho-glyceroyl phosphate + NADH + H(+). It functions in the pathway carbohydrate degradation; glycolysis; pyruvate from D-glyceraldehyde 3-phosphate: step 1/5. This chain is Glyceraldehyde-3-phosphate dehydrogenase 2 (Gapdh2), found in Drosophila pseudoobscura pseudoobscura (Fruit fly).